Here is a 425-residue protein sequence, read N- to C-terminus: 2,3-diketo-L-gulonate TRAP transporter large permease protein YiaN (425 aa).

11 helical membrane-spanning segments follow: residues 3–23, 54–74, 93–113, 139–159, 170–190, 209–229, 235–255, 277–297, 314–334, 355–375, and 399–419; these read VLIF…IAWA, FSLL…AGGL, LGYV…SAVA, LIAS…FIIF, LFMA…LTWW, IWHS…IIGG, FTPT…ATVI, VVMF…IAEL, LLFI…DLTP, IYFG…PPIG, and YVLV…LIIL.

Belongs to the TRAP transporter large permease family. As to quaternary structure, the complex comprises the extracytoplasmic solute receptor protein YiaO, and the two transmembrane proteins YiaM and YiaN.

The protein localises to the cell inner membrane. Its function is as follows. Part of the tripartite ATP-independent periplasmic (TRAP) transport system YiaMNO involved in the uptake of 2,3-diketo-L-gulonate. This is 2,3-diketo-L-gulonate TRAP transporter large permease protein YiaN (yiaN) from Escherichia coli (strain K12).